We begin with the raw amino-acid sequence, 355 residues long: C-X-C chemokine receptor type 1 (355 aa).

Topologically, residues 1–40 (MEVNVWNMTDLWTWFEDEFANATGMPPVEKDYSPCLVVTQ) are extracellular. N7 and N21 each carry an N-linked (GlcNAc...) asparagine glycan. A helical transmembrane segment spans residues 41-67 (TLNKYVVVVIYALVFLLSLLGNSLVML). The Cytoplasmic segment spans residues 68 to 73 (VILYSR). The helical transmembrane segment at 74–92 (SNRSVTDVYLLNLAMADLL) threads the bilayer. The Extracellular portion of the chain corresponds to 93–114 (FALTMPIWAVSKEKGWIFGTPL). The chain crosses the membrane as a helical span at residues 115–138 (CKVVSLVKEVNFYSGILLLACISV). C115 and C192 are oxidised to a cystine. Over 139 to 159 (DRYLAIVHATRTLTQKRHLVK) the chain is Cytoplasmic. A helical membrane pass occupies residues 160–184 (FICLGIWALSLILSLPFFLFRQVFS). Topologically, residues 185 to 204 (PNNSSPVCYEDLGHNTAKWR) are extracellular. The helical transmembrane segment at 205–232 (MVLRILPHTFGFILPLLVMLFCYGFTLR) threads the bilayer. At 233–247 (TLFQAHMGQKHRAMR) the chain is on the cytoplasmic side. Residues 248–270 (VIFAVVLIFLLCWLPYNLVLLAD) traverse the membrane as a helical segment. Over 271 to 290 (TLMRTHVIQETCQRRNDIDR) the chain is Extracellular. The chain crosses the membrane as a helical span at residues 291–313 (ALDATEILGFLHSCLNPIIYAFI). The Cytoplasmic segment spans residues 314–355 (GQNFRNGFLKMLAARGLISKEFLTRHRVTSYTSSSTNVPSNL).

This sequence belongs to the G-protein coupled receptor 1 family. Interacts with IL8. Interacts with GNAI2. Neutrophils.

The protein resides in the cell membrane. Its function is as follows. Receptor to interleukin-8, which is a powerful neutrophils chemotactic factor. Binding of IL-8 to the receptor causes activation of neutrophils. This response is mediated via a G-protein that activates a phosphatidylinositol-calcium second messenger system. The protein is C-X-C chemokine receptor type 1 (CXCR1) of Oryctolagus cuniculus (Rabbit).